We begin with the raw amino-acid sequence, 453 residues long: D-aminoacyl-tRNA deacylase (453 aa).

The tract at residues 428 to 453 (VRADVALHERPRERVRRPSDDEGKGN) is disordered.

Belongs to the DtdA deacylase family. Monomer. The cofactor is Zn(2+).

The enzyme catalyses a D-aminoacyl-tRNA + H2O = a tRNA + a D-alpha-amino acid + H(+). It catalyses the reaction glycyl-tRNA(Ala) + H2O = tRNA(Ala) + glycine + H(+). In terms of biological role, D-aminoacyl-tRNA deacylase with broad substrate specificity. By recycling D-aminoacyl-tRNA to D-amino acids and free tRNA molecules, this enzyme counteracts the toxicity associated with the formation of D-aminoacyl-tRNA entities in vivo. The polypeptide is D-aminoacyl-tRNA deacylase (Halobacterium salinarum (strain ATCC 29341 / DSM 671 / R1)).